Here is a 106-residue protein sequence, read N- to C-terminus: ATP-dependent Clp protease adapter protein ClpS (106 aa).

It belongs to the ClpS family. As to quaternary structure, binds to the N-terminal domain of the chaperone ClpA.

Its function is as follows. Involved in the modulation of the specificity of the ClpAP-mediated ATP-dependent protein degradation. In Vibrio atlanticus (strain LGP32) (Vibrio splendidus (strain Mel32)), this protein is ATP-dependent Clp protease adapter protein ClpS.